The sequence spans 259 residues: NAD kinase (259 aa).

The active-site Proton acceptor is Asp-49. Residues 49 to 50 (DG), Arg-54, 118 to 119 (NE), Asp-148, Ala-156, 159 to 164 (TAYNYS), and Ala-183 each bind NAD(+).

The protein belongs to the NAD kinase family. A divalent metal cation serves as cofactor.

It is found in the cytoplasm. It carries out the reaction NAD(+) + ATP = ADP + NADP(+) + H(+). Involved in the regulation of the intracellular balance of NAD and NADP, and is a key enzyme in the biosynthesis of NADP. Catalyzes specifically the phosphorylation on 2'-hydroxyl of the adenosine moiety of NAD to yield NADP. This is NAD kinase from Xylella fastidiosa (strain 9a5c).